Consider the following 551-residue polypeptide: Delta-selinene synthase TPS7FN (551 aa).

5 residues coordinate (2E,6E)-farnesyl diphosphate: arginine 266, aspartate 303, aspartate 307, arginine 444, and aspartate 447. Mg(2+) is bound by residues aspartate 303 and aspartate 307. A DDXXD motif motif is present at residues 303-307 (DDIYD). Positions 447, 451, and 455 each coordinate Mg(2+).

The protein belongs to the terpene synthase family. Tpsb subfamily. Mg(2+) is required as a cofactor. It depends on Mn(2+) as a cofactor.

It catalyses the reaction (2E,6E)-farnesyl diphosphate = delta-selinene + diphosphate. It carries out the reaction (2E)-geranyl diphosphate = beta-myrcene + diphosphate. The catalysed reaction is (2E)-geranyl diphosphate = (4S)-limonene + diphosphate. The enzyme catalyses (2E,6E)-farnesyl diphosphate + H2O = selina-6-en-4-ol + diphosphate. Its pathway is secondary metabolite biosynthesis; terpenoid biosynthesis. In terms of biological role, involved in sesquiterpene olefins biosynthesis, constituants of cannabinoids and terpenoids-rich resins. Catalyzes mainly the conversion of (2E)-farnesyl diphosphate to delta-selinene, and also produces minor products such as selina-6-en-4-ol. Can also use (2E)-geranyl diphosphate as substrate with low efficiency, producing minor amounts of myrcene and limonene. In Cannabis sativa (Hemp), this protein is Delta-selinene synthase TPS7FN.